Here is a 283-residue protein sequence, read N- to C-terminus: Diaminopimelate epimerase (283 aa).

Residues Asn-11 and Asn-65 each contribute to the substrate site. The active-site Proton donor is Cys-74. Substrate-binding positions include 75-76 (GN), Asn-163, Asn-196, and 214-215 (ER). Residue Cys-223 is the Proton acceptor of the active site. 224–225 (GT) is a substrate binding site.

This sequence belongs to the diaminopimelate epimerase family. Homodimer.

It localises to the cytoplasm. It carries out the reaction (2S,6S)-2,6-diaminopimelate = meso-2,6-diaminopimelate. Its pathway is amino-acid biosynthesis; L-lysine biosynthesis via DAP pathway; DL-2,6-diaminopimelate from LL-2,6-diaminopimelate: step 1/1. Catalyzes the stereoinversion of LL-2,6-diaminopimelate (L,L-DAP) to meso-diaminopimelate (meso-DAP), a precursor of L-lysine and an essential component of the bacterial peptidoglycan. In Desulfitobacterium hafniense (strain DSM 10664 / DCB-2), this protein is Diaminopimelate epimerase.